Here is a 449-residue protein sequence, read N- to C-terminus: Tryptophan--tRNA ligase (449 aa).

Residues 10–12 (TTT) and 18–19 (GN) contribute to the ATP site. Residues 11-19 (TTGTPHLGN) carry the 'HIGH' region motif. Position 143 (D143) interacts with L-tryptophan. Residues 155-157 (GRD), L197, and 204-208 (KMSKS) each bind ATP. A 'KMSKS' region motif is present at residues 204–208 (KMSKS).

Belongs to the class-I aminoacyl-tRNA synthetase family. Homodimer.

Its subcellular location is the cytoplasm. The enzyme catalyses tRNA(Trp) + L-tryptophan + ATP = L-tryptophyl-tRNA(Trp) + AMP + diphosphate + H(+). In terms of biological role, catalyzes the attachment of tryptophan to tRNA(Trp). The sequence is that of Tryptophan--tRNA ligase from Pseudomonas putida (strain ATCC 47054 / DSM 6125 / CFBP 8728 / NCIMB 11950 / KT2440).